The sequence spans 415 residues: Probable G-protein coupled receptor 19 (415 aa).

Topologically, residues 1 to 69 (MGFDHRMETD…LNPGEVATAS (69 aa)) are extracellular. Asparagine 25 and asparagine 52 each carry an N-linked (GlcNAc...) asparagine glycan. Residues 70 to 90 (IFFGALWLFSIFGNSLVCLVI) form a helical membrane-spanning segment. Over 91-102 (HRSRRTQSTTNY) the chain is Cytoplasmic. Residues 103–123 (FVVSMACADLLISVASTPFVV) traverse the membrane as a helical segment. Over 124-152 (LQFTTGRWTLGSAMCKVVRYFQYLTPGVQ) the chain is Extracellular. A disulfide bond links cysteine 138 and cysteine 210. The helical transmembrane segment at 153-173 (IYVLLSICIDRFYTIVYPLSF) threads the bilayer. Residues 174 to 182 (KVSREKAKR) lie on the Cytoplasmic side of the membrane. The chain crosses the membrane as a helical span at residues 183–203 (MIAASWILDAAFVTPVFFFYG). At 204-221 (SNWDSHCNYFLPPSWEGT) the chain is on the extracellular side. The chain crosses the membrane as a helical span at residues 222 to 242 (AYTVIHFLVGFVIPSVLIILF). At 243 to 277 (YQKVIKYIWRIGTDGRTLRRTMNIVPRTKVKTVKM) the chain is on the cytoplasmic side. A helical membrane pass occupies residues 278-298 (FLLLNLVFLFSWLPFHVAQLW). The Extracellular portion of the chain corresponds to 299-309 (HPHEQDYRKSS). Residues 310-332 (LVFTAVTWVSFSSSASKPTLYSI) form a helical membrane-spanning segment. At 333 to 415 (YNANFRRGMK…INSNPPNTFV (83 aa)) the chain is on the cytoplasmic side.

The protein belongs to the G-protein coupled receptor 1 family. In terms of tissue distribution, abundant expression in the brain.

The protein localises to the cell membrane. In terms of biological role, G-protein coupled receptor that plays a role in the regulation of circadian rhythms and energy metabolism. Participates in maintaining proper circadian gene expression in the suprachiasmatic nucleus (SCN), the locus of the master circadian clock in the brain. May function as a coordinator of aging-associated metabolic dysfunction, stress response, DNA integrity management, and eventual senescence. Upon binding to adropin, modulates mitochondrial energy metabolism via the p44/42-PDK4 signaling pathway, influencing pyruvate dehydrogenase activity. The polypeptide is Probable G-protein coupled receptor 19 (Gpr19) (Rattus norvegicus (Rat)).